A 335-amino-acid chain; its full sequence is Phosphate acyltransferase (335 aa).

Belongs to the PlsX family. As to quaternary structure, homodimer. Probably interacts with PlsY.

Its subcellular location is the cytoplasm. It catalyses the reaction a fatty acyl-[ACP] + phosphate = an acyl phosphate + holo-[ACP]. It functions in the pathway lipid metabolism; phospholipid metabolism. In terms of biological role, catalyzes the reversible formation of acyl-phosphate (acyl-PO(4)) from acyl-[acyl-carrier-protein] (acyl-ACP). This enzyme utilizes acyl-ACP as fatty acyl donor, but not acyl-CoA. The chain is Phosphate acyltransferase from Streptococcus pyogenes serotype M6 (strain ATCC BAA-946 / MGAS10394).